The chain runs to 150 residues: Arginine repressor (150 aa).

This sequence belongs to the ArgR family.

It is found in the cytoplasm. The protein operates within amino-acid biosynthesis; L-arginine biosynthesis [regulation]. In terms of biological role, regulates arginine biosynthesis genes. This Staphylococcus saprophyticus subsp. saprophyticus (strain ATCC 15305 / DSM 20229 / NCIMB 8711 / NCTC 7292 / S-41) protein is Arginine repressor.